Here is a 393-residue protein sequence, read N- to C-terminus: Chorismate synthase (393 aa).

Arg-40 and Arg-46 together coordinate NADP(+). Residues 129 to 131 (RAS), 251 to 252 (QA), Gly-301, 316 to 320 (KPIST), and Arg-342 contribute to the FMN site.

Belongs to the chorismate synthase family. In terms of assembly, homotetramer. Requires FMNH2 as cofactor.

The catalysed reaction is 5-O-(1-carboxyvinyl)-3-phosphoshikimate = chorismate + phosphate. Its pathway is metabolic intermediate biosynthesis; chorismate biosynthesis; chorismate from D-erythrose 4-phosphate and phosphoenolpyruvate: step 7/7. In terms of biological role, catalyzes the anti-1,4-elimination of the C-3 phosphate and the C-6 proR hydrogen from 5-enolpyruvylshikimate-3-phosphate (EPSP) to yield chorismate, which is the branch point compound that serves as the starting substrate for the three terminal pathways of aromatic amino acid biosynthesis. This reaction introduces a second double bond into the aromatic ring system. In Koribacter versatilis (strain Ellin345), this protein is Chorismate synthase.